We begin with the raw amino-acid sequence, 182 residues long: Large ribosomal subunit protein uL5 (182 aa).

Part of the 50S ribosomal subunit; part of the 5S rRNA/uL5/uL18/bL25 (TL7) subcomplex; has also been isolated as a complex with 5S rRNA, bL25 (TL7) and DNA binding protein II. Forms a bridge to the 30S subunit in the 70S ribosome, contacting protein uS13; this bridge is straddled by the 5S rRNA. Contacts the P site tRNA.

This is one of the proteins that bind and probably mediate the attachment of the 5S RNA into the large ribosomal subunit, where it forms part of the central protuberance. In the 70S ribosome it contacts protein S13 of the 30S subunit (forming bridge B1b) connecting the head of the 30S subunit to the top of the 50S subunit. The bridge itself contacts the P site tRNA and is implicated in movement during ribosome translocation. Also contacts the P site tRNA independently of the intersubunit bridge; the 5S rRNA and some of its associated proteins might help stabilize positioning of ribosome-bound tRNAs. In Thermus thermophilus (strain ATCC 27634 / DSM 579 / HB8), this protein is Large ribosomal subunit protein uL5 (rplE).